The following is a 734-amino-acid chain: Photosystem I P700 chlorophyll a apoprotein A2 (734 aa).

8 consecutive transmembrane segments (helical) span residues 46 to 69, 135 to 158, 175 to 199, 273 to 291, 330 to 353, 369 to 395, 417 to 439, and 517 to 535; these read IFAS…FHVA, LYNG…LHLQ, LNHH…HVAI, IAHH…GHMY, LHFQ…QHMY, AALY…IFFI, AIIS…LYVH, and FLVH…LILV. [4Fe-4S] cluster contacts are provided by cysteine 559 and cysteine 568. A run of 2 helical transmembrane segments spans residues 575–596 and 643–665; these read AFYL…YWHW and LSVW…MFLI. The chlorophyll a site is built by histidine 654, methionine 662, and tyrosine 670. Position 671 (tryptophan 671) interacts with phylloquinone. Residues 707–727 traverse the membrane as a helical segment; it reads LVGLAHFSVGYIFTYAAFLIA.

This sequence belongs to the PsaA/PsaB family. The PsaA/B heterodimer binds the P700 chlorophyll special pair and subsequent electron acceptors. PSI consists of a core antenna complex that captures photons, and an electron transfer chain that converts photonic excitation into a charge separation. The eukaryotic PSI reaction center is composed of at least 11 subunits. It depends on P700 is a chlorophyll a/chlorophyll a' dimer, A0 is one or more chlorophyll a, A1 is one or both phylloquinones and FX is a shared 4Fe-4S iron-sulfur center. as a cofactor.

It localises to the plastid. It is found in the chloroplast thylakoid membrane. It catalyses the reaction reduced [plastocyanin] + hnu + oxidized [2Fe-2S]-[ferredoxin] = oxidized [plastocyanin] + reduced [2Fe-2S]-[ferredoxin]. Its function is as follows. PsaA and PsaB bind P700, the primary electron donor of photosystem I (PSI), as well as the electron acceptors A0, A1 and FX. PSI is a plastocyanin-ferredoxin oxidoreductase, converting photonic excitation into a charge separation, which transfers an electron from the donor P700 chlorophyll pair to the spectroscopically characterized acceptors A0, A1, FX, FA and FB in turn. Oxidized P700 is reduced on the lumenal side of the thylakoid membrane by plastocyanin. This Marchantia polymorpha (Common liverwort) protein is Photosystem I P700 chlorophyll a apoprotein A2.